The sequence spans 360 residues: Ethanolamine-phosphate cytidylyltransferase (360 aa).

Residues Gly-207 to Phe-208, His-215 to Ala-218, Lys-243, His-291 to Asp-294, and His-321 to Leu-325 contribute to the CTP site.

It belongs to the cytidylyltransferase family.

The catalysed reaction is phosphoethanolamine + CTP + H(+) = CDP-ethanolamine + diphosphate. It functions in the pathway phospholipid metabolism; phosphatidylethanolamine biosynthesis; phosphatidylethanolamine from ethanolamine: step 2/3. In terms of biological role, ethanolamine-phosphate cytidylyltransferase that catalyzes the second step in the synthesis of phosphatidylethanolamine (PE) from ethanolamine via the CDP-ethanolamine pathway. In Dictyostelium discoideum (Social amoeba), this protein is Ethanolamine-phosphate cytidylyltransferase (pctA).